A 451-amino-acid polypeptide reads, in one-letter code: Glycine--tRNA ligase (451 aa).

Residues Arg101 and Glu151 each contribute to the substrate site. ATP is bound by residues 183-185 (RNE), 193-198 (FRTCEF), 267-268 (EL), and 312-315 (GLTR). 198–202 (FEQME) provides a ligand contact to substrate. 308-312 (ETSAG) serves as a coordination point for substrate.

The protein belongs to the class-II aminoacyl-tRNA synthetase family. Homodimer.

The protein resides in the cytoplasm. The catalysed reaction is tRNA(Gly) + glycine + ATP = glycyl-tRNA(Gly) + AMP + diphosphate. Functionally, catalyzes the attachment of glycine to tRNA(Gly). The sequence is that of Glycine--tRNA ligase from Treponema denticola (strain ATCC 35405 / DSM 14222 / CIP 103919 / JCM 8153 / KCTC 15104).